A 453-amino-acid chain; its full sequence is Allantoinase (453 aa).

Zn(2+) is bound by residues His59, His61, Lys146, His186, His242, and Asp315. Position 146 is an N6-carboxylysine (Lys146).

The protein belongs to the metallo-dependent hydrolases superfamily. Allantoinase family. As to quaternary structure, homotetramer. Requires Zn(2+) as cofactor. In terms of processing, carboxylation allows a single lysine to coordinate two zinc ions.

It catalyses the reaction (S)-allantoin + H2O = allantoate + H(+). It participates in nitrogen metabolism; (S)-allantoin degradation; allantoate from (S)-allantoin: step 1/1. Catalyzes the conversion of allantoin (5-ureidohydantoin) to allantoic acid by hydrolytic cleavage of the five-member hydantoin ring. The sequence is that of Allantoinase from Escherichia coli (strain 55989 / EAEC).